A 120-amino-acid chain; its full sequence is NAD(P)H-quinone oxidoreductase subunit 3, chloroplastic (120 aa).

3 helical membrane-spanning segments follow: residues 9–29, 64–84, and 88–108; these read IFWA…LISG, MFAL…PWAM, and VLGL…IVGS.

This sequence belongs to the complex I subunit 3 family. As to quaternary structure, NDH is composed of at least 16 different subunits, 5 of which are encoded in the nucleus.

It localises to the plastid. The protein resides in the chloroplast thylakoid membrane. It carries out the reaction a plastoquinone + NADH + (n+1) H(+)(in) = a plastoquinol + NAD(+) + n H(+)(out). The enzyme catalyses a plastoquinone + NADPH + (n+1) H(+)(in) = a plastoquinol + NADP(+) + n H(+)(out). Its function is as follows. NDH shuttles electrons from NAD(P)H:plastoquinone, via FMN and iron-sulfur (Fe-S) centers, to quinones in the photosynthetic chain and possibly in a chloroplast respiratory chain. The immediate electron acceptor for the enzyme in this species is believed to be plastoquinone. Couples the redox reaction to proton translocation, and thus conserves the redox energy in a proton gradient. This chain is NAD(P)H-quinone oxidoreductase subunit 3, chloroplastic, found in Manihot esculenta (Cassava).